A 292-amino-acid polypeptide reads, in one-letter code: tRNA-cytidine(32) 2-sulfurtransferase (292 aa).

The PP-loop motif motif lies at 53 to 58 (SGGKDS). [4Fe-4S] cluster contacts are provided by C128, C131, and C219.

It belongs to the TtcA family. Homodimer. It depends on Mg(2+) as a cofactor. The cofactor is [4Fe-4S] cluster.

Its subcellular location is the cytoplasm. The catalysed reaction is cytidine(32) in tRNA + S-sulfanyl-L-cysteinyl-[cysteine desulfurase] + AH2 + ATP = 2-thiocytidine(32) in tRNA + L-cysteinyl-[cysteine desulfurase] + A + AMP + diphosphate + H(+). It participates in tRNA modification. Functionally, catalyzes the ATP-dependent 2-thiolation of cytidine in position 32 of tRNA, to form 2-thiocytidine (s(2)C32). The sulfur atoms are provided by the cysteine/cysteine desulfurase (IscS) system. This Cereibacter sphaeroides (strain ATCC 17023 / DSM 158 / JCM 6121 / CCUG 31486 / LMG 2827 / NBRC 12203 / NCIMB 8253 / ATH 2.4.1.) (Rhodobacter sphaeroides) protein is tRNA-cytidine(32) 2-sulfurtransferase.